The primary structure comprises 143 residues: Large ribosomal subunit protein uL11 (143 aa).

It belongs to the universal ribosomal protein uL11 family. Part of the ribosomal stalk of the 50S ribosomal subunit. Interacts with L10 and the large rRNA to form the base of the stalk. L10 forms an elongated spine to which L12 dimers bind in a sequential fashion forming a multimeric L10(L12)X complex. In terms of processing, one or more lysine residues are methylated.

Its function is as follows. Forms part of the ribosomal stalk which helps the ribosome interact with GTP-bound translation factors. In Cellvibrio japonicus (strain Ueda107) (Pseudomonas fluorescens subsp. cellulosa), this protein is Large ribosomal subunit protein uL11.